Reading from the N-terminus, the 174-residue chain is uncharacterized protein (174 aa).

The protein belongs to the archaeal NMN adenylyltransferase family.

This is an uncharacterized protein from Archaeoglobus fulgidus (strain ATCC 49558 / DSM 4304 / JCM 9628 / NBRC 100126 / VC-16).